Reading from the N-terminus, the 342-residue chain is MTTLTITRPDDWHLHLRDGDVLTDTVRDSGRYNGRALIMPNLVPPVITTEQALSYRERIQAVNSSNTFAPIMSLYLTEKTTSDEIRKAKATGYIVAAKLYPAGATTNSDSGVSDVQKVYPILKTMQEEGMLLLIHGEVTTHDIDIFDREKTFLDTVLAPIVNDFPELKIVLEHITTKDAADFVKNAGPNVAATITAHHLLFNRNHMLVGGIKPHFYCLPILKRNTHQLALIEAATSGSPKFFLGTDSAPHSKEKKEAACGCAGSYTAHASIELYTEVFENEGKLDNLEAFASFNGPDFYNLPRNTDTITLVKEAWITPETMSFGNDVVVPIRAGEAVEWLVK.

The Zn(2+) site is built by histidine 13 and histidine 15. Residues 15–17 and asparagine 41 contribute to the substrate site; that span reads HLR. The Zn(2+) site is built by lysine 98, histidine 135, and histidine 173. Lysine 98 carries the N6-carboxylysine modification. Histidine 135 is a substrate binding site. A substrate-binding site is contributed by leucine 218. Aspartate 246 contributes to the Zn(2+) binding site. The active site involves aspartate 246. Substrate contacts are provided by histidine 250 and alanine 262.

This sequence belongs to the metallo-dependent hydrolases superfamily. DHOase family. Class II DHOase subfamily. Homodimer. Requires Zn(2+) as cofactor.

The catalysed reaction is (S)-dihydroorotate + H2O = N-carbamoyl-L-aspartate + H(+). Its pathway is pyrimidine metabolism; UMP biosynthesis via de novo pathway; (S)-dihydroorotate from bicarbonate: step 3/3. Functionally, catalyzes the reversible cyclization of carbamoyl aspartate to dihydroorotate. The polypeptide is Dihydroorotase (Aliivibrio salmonicida (strain LFI1238) (Vibrio salmonicida (strain LFI1238))).